The chain runs to 268 residues: Undecaprenyl-diphosphatase (268 aa).

Helical transmembrane passes span 47–67 (FAIL…FFKL), 83–103 (FIIG…IAGK), 109–129 (LFDP…LLWV), 144–164 (YPLL…IPGV), 184–204 (AAEF…VYDF), 218–238 (LVAI…KAFL), and 246–266 (FVLF…ALAL).

This sequence belongs to the UppP family.

The protein resides in the cell inner membrane. The enzyme catalyses di-trans,octa-cis-undecaprenyl diphosphate + H2O = di-trans,octa-cis-undecaprenyl phosphate + phosphate + H(+). Its function is as follows. Catalyzes the dephosphorylation of undecaprenyl diphosphate (UPP). Confers resistance to bacitracin. In Bradyrhizobium sp. (strain BTAi1 / ATCC BAA-1182), this protein is Undecaprenyl-diphosphatase.